Here is a 401-residue protein sequence, read N- to C-terminus: Subtilisin-like protease 10 (401 aa).

The signal sequence occupies residues 1 to 19; sequence MLFLKAVIAILSVLPAADA. Positions 20–116 are excised as a propeptide; the sequence is AAILNFENKQ…IEPDRMASAQ (97 aa). In terms of domain architecture, Inhibitor I9 spans 35–112; sequence SYIVVLKNDI…QVDYIEPDRM (78 aa). The 276-residue stretch at 126–401 folds into the Peptidase S8 domain; the sequence is SWGLGRISHQ…NRLLYNGSGQ (276 aa). Residues Asp158 and His189 each act as charge relay system in the active site. Asn250 carries N-linked (GlcNAc...) asparagine glycosylation. Ser347 functions as the Charge relay system in the catalytic mechanism. A glycan (N-linked (GlcNAc...) asparagine) is linked at Asn397.

Belongs to the peptidase S8 family.

Its subcellular location is the secreted. Functionally, secreted subtilisin-like serine protease with keratinolytic activity that contributes to pathogenicity. This is Subtilisin-like protease 10 (SUB10) from Arthroderma otae (strain ATCC MYA-4605 / CBS 113480) (Microsporum canis).